The primary structure comprises 274 residues: 3',5'-cyclic adenosine monophosphate phosphodiesterase CpdA (274 aa).

7 residues coordinate Fe cation: Asp-21, His-23, Asp-63, Asn-93, His-163, His-202, and His-204. AMP-binding positions include His-23, Asp-63, and 93–94; that span reads NH. His-204 is a binding site for AMP.

This sequence belongs to the cyclic nucleotide phosphodiesterase class-III family. Fe(2+) serves as cofactor.

The catalysed reaction is 3',5'-cyclic AMP + H2O = AMP + H(+). Hydrolyzes cAMP to 5'-AMP. Plays an important regulatory role in modulating the intracellular concentration of cAMP, thereby influencing cAMP-dependent processes. May coordinate responses to nutritional stress, ensuring optimal competence development. The chain is 3',5'-cyclic adenosine monophosphate phosphodiesterase CpdA from Haemophilus influenzae (strain ATCC 51907 / DSM 11121 / KW20 / Rd).